A 1227-amino-acid chain; its full sequence is Methionine synthase (1227 aa).

In terms of domain architecture, Hcy-binding spans 2-325 (SSKVEQLRAQ…QHIAAMSRAV (324 aa)). Residues Cys247, Cys310, and Cys311 each contribute to the Zn(2+) site. A Pterin-binding domain is found at 356-617 (FVNVGERTNV…LPAELRDAVE (262 aa)). Residues 650–744 (QQAEWRSWEV…FIEASKEQGK (95 aa)) form the B12-binding N-terminal domain. Residues Glu694, 756 to 760 (GDVHD), His759, Ser804, Thr808, and Ala860 contribute to the methylcob(III)alamin site. In terms of domain architecture, B12-binding spans 746–881 (NGKMVIATVK…SDTQRDDFVA (136 aa)). An AdoMet activation domain is found at 897–1227 (KKPRTPPVTL…LAPNLGYDAD (331 aa)). Residues Asp946, Arg1134, and 1189 to 1190 (YY) each bind S-adenosyl-L-methionine.

It belongs to the vitamin-B12 dependent methionine synthase family. The cofactor is methylcob(III)alamin. It depends on Zn(2+) as a cofactor.

The enzyme catalyses (6S)-5-methyl-5,6,7,8-tetrahydrofolate + L-homocysteine = (6S)-5,6,7,8-tetrahydrofolate + L-methionine. The protein operates within amino-acid biosynthesis; L-methionine biosynthesis via de novo pathway; L-methionine from L-homocysteine (MetH route): step 1/1. Catalyzes the transfer of a methyl group from methyl-cobalamin to homocysteine, yielding enzyme-bound cob(I)alamin and methionine. Subsequently, remethylates the cofactor using methyltetrahydrofolate. The chain is Methionine synthase (metH) from Escherichia coli (strain K12).